The primary structure comprises 432 residues: MAIGDKRKKNRKNKQNKKNKNDNELILLHNTNNKLINSNSLVNSNNKNNNNKNGNGGGVNVMVNQCYNVLNGSFLFGSFFNKFDVLFNYLKSFLTIQKQSLNVNKLTDSNITISQKDNITFSTNSNNNNNSTNGNSNSPSIIIQQQQQHHHFNESQSSNNNNNNGSSLSSLGGSYITVDDLNDQLKIVQLEQKIVNLEKEIQRMRNEQNQIHKQNLNQYHELLKQIINAASLIQQQPTSIIQQPPQPFVAPPPPPPPPPPMVFKPKPIVVQPVSTPSSSSNSLASKKSNGVPQFSISMADITGVKLRKTSSKFAQSNSSPSRVNGSPARNRVVTSPAGIKKSPFKRVLTPVKKSATTTTTSSSSNNATTTTAKGSTSTPLKDITNSNNIKNSVLSPKSITKPNTPSNIIFSPLSNNNNNASPYKPLTISTLR.

Over residues 1–18 the composition is skewed to basic residues; the sequence is MAIGDKRKKNRKNKQNKK. 3 disordered regions span residues 1-23, 37-56, and 122-168; these read MAIGDKRKKNRKNKQNKKNKNDN, NSNSLVNSNNKNNNNKNGNG, and STNS…GSSL. Low complexity-rich tracts occupy residues 37-53, 122-147, and 154-168; these read NSNSLVNSNNKNNNNKN, STNSNNNNNSTNGNSNSPSIIIQQQQ, and ESQSSNNNNNNGSSL. Residues 181–226 are a coiled coil; sequence LNDQLKIVQLEQKIVNLEKEIQRMRNEQNQIHKQNLNQYHELLKQI. 2 disordered regions span residues 270-290 and 310-432; these read VQPVSTPSSSSNSLASKKSNG and SSKF…STLR. Over residues 274-288 the composition is skewed to low complexity; the sequence is STPSSSSNSLASKKS. Residues 311–324 are compositionally biased toward polar residues; sequence SKFAQSNSSPSRVN. The span at 352 to 378 shows a compositional bias: low complexity; sequence KKSATTTTTSSSSNNATTTTAKGSTST. Over residues 383-414 the composition is skewed to polar residues; it reads ITNSNNIKNSVLSPKSITKPNTPSNIIFSPLS.

This is an uncharacterized protein from Dictyostelium discoideum (Social amoeba).